Reading from the N-terminus, the 132-residue chain is Nickel-responsive regulator (132 aa).

4 residues coordinate Ni(2+): histidine 76, histidine 87, histidine 89, and cysteine 95.

The protein belongs to the transcriptional regulatory CopG/NikR family. As to quaternary structure, homotetramer. It depends on Ni(2+) as a cofactor.

Functionally, transcriptional repressor of the nikABCDE operon. Is active in the presence of excessive concentrations of intracellular nickel. The sequence is that of Nickel-responsive regulator from Klebsiella pneumoniae (strain 342).